We begin with the raw amino-acid sequence, 482 residues long: Replication factor C large subunit (482 aa).

Residue 46–53 participates in ATP binding; it reads GPPGSGKT. The interval 420 to 482 is disordered; that stretch reads EKETPKKKKK…KKQATLDSFF (63 aa). The span at 442-476 shows a compositional bias: basic and acidic residues; sequence KISEPPKEPLKEVIEETVEKTDKKEKEKKDPKKQA.

This sequence belongs to the activator 1 small subunits family. RfcL subfamily. As to quaternary structure, heteromultimer composed of small subunits (RfcS) and large subunits (RfcL).

In terms of biological role, part of the RFC clamp loader complex which loads the PCNA sliding clamp onto DNA. This is Replication factor C large subunit from Methanococcus maripaludis (strain C7 / ATCC BAA-1331).